The following is a 228-amino-acid chain: Cytidylate kinase (228 aa).

7–15 (GPVATGKST) serves as a coordination point for ATP.

Belongs to the cytidylate kinase family. Type 1 subfamily.

Its subcellular location is the cytoplasm. The catalysed reaction is CMP + ATP = CDP + ADP. It carries out the reaction dCMP + ATP = dCDP + ADP. The protein is Cytidylate kinase of Protochlamydia amoebophila (strain UWE25).